The following is a 281-amino-acid chain: 2-dehydro-3-deoxyphosphooctonate aldolase (281 aa).

This sequence belongs to the KdsA family.

It is found in the cytoplasm. The catalysed reaction is D-arabinose 5-phosphate + phosphoenolpyruvate + H2O = 3-deoxy-alpha-D-manno-2-octulosonate-8-phosphate + phosphate. It functions in the pathway carbohydrate biosynthesis; 3-deoxy-D-manno-octulosonate biosynthesis; 3-deoxy-D-manno-octulosonate from D-ribulose 5-phosphate: step 2/3. It participates in bacterial outer membrane biogenesis; lipopolysaccharide biosynthesis. This is 2-dehydro-3-deoxyphosphooctonate aldolase from Pseudomonas aeruginosa (strain UCBPP-PA14).